Consider the following 152-residue polypeptide: Interleukin-3 (152 aa).

Residues 1–19 (MSRLPVLLLLQLLVRPGLQ) form the signal peptide. N-linked (GlcNAc...) asparagine glycans are attached at residues asparagine 34 and asparagine 89. Cysteine 35 and cysteine 103 are disulfide-bonded.

This sequence belongs to the IL-3 family. As to quaternary structure, interacts with IL3RA. Activated T-cells, mast cells, natural killer cells.

It is found in the secreted. Cytokine secreted predominantly by activated T-lymphocytes as well as mast cells and osteoblastic cells that controls the production and differentiation of hematopoietic progenitor cells into lineage-restricted cells. Also stimulates mature basophils, eosinophils, and monocytes to become functionally activated. In addition, plays an important role in neural cell proliferation and survival. Participates as well in bone homeostasis and inhibits osteoclast differentiation by preventing NF-kappa-B nuclear translocation and activation. Mechanistically, exerts its biological effects through a receptor composed of IL3RA subunit and a signal transducing subunit IL3RB. Receptor stimulation results in the rapid activation of JAK2 kinase activity leading to STAT5-mediated transcriptional program. Alternatively, contributes to cell survival under oxidative stress in non-hematopoietic systems by activating pathways mediated by PI3K/AKT and ERK. This is Interleukin-3 from Homo sapiens (Human).